A 216-amino-acid polypeptide reads, in one-letter code: Small ribosomal subunit protein uS3c (216 aa).

In terms of domain architecture, KH type-2 spans 43 to 118; sequence IKNYIQKNIR…KLNIAIVKIT (76 aa).

Belongs to the universal ribosomal protein uS3 family. As to quaternary structure, part of the 30S ribosomal subunit.

The protein localises to the plastid. It is found in the chloroplast. The polypeptide is Small ribosomal subunit protein uS3c (rps3) (Phaseolus vulgaris (Kidney bean)).